Here is a 317-residue protein sequence, read N- to C-terminus: Secreted mono- and diacylglycerol lipase 3 (317 aa).

Positions 1–29 (MMFADDLVRMAVLRFITVALAAITNVANA) are cleaved as a signal peptide. The cysteines at positions 61 and 310 are disulfide-linked. A glycan (N-linked (GlcNAc...) asparagine) is linked at asparagine 108. The active-site Nucleophile is serine 175. An N-linked (GlcNAc...) asparagine glycan is attached at asparagine 194. Residue aspartate 234 is part of the active site. N-linked (GlcNAc...) asparagine glycosylation occurs at asparagine 258. Residue histidine 294 is part of the active site.

Belongs to the AB hydrolase superfamily. Lipase family. Class 3 subfamily.

Its subcellular location is the secreted. It carries out the reaction a monoacylglycerol + H2O = glycerol + a fatty acid + H(+). The enzyme catalyses a diacylglycerol + H2O = a monoacylglycerol + a fatty acid + H(+). In terms of biological role, secreted mono- and diacylglycerol lipase involved in plant virulence. Has a substrate preference for p-nitrophenyl esters with a carbon chain length of C10 (p-nitrophenyl caprate). In Gibberella zeae (strain ATCC MYA-4620 / CBS 123657 / FGSC 9075 / NRRL 31084 / PH-1) (Wheat head blight fungus), this protein is Secreted mono- and diacylglycerol lipase 3.